The following is a 332-amino-acid chain: tRNA-dihydrouridine(20/20a) synthase (332 aa).

FMN is bound by residues 20-22 and Q73; that span reads PMM. C103 functions as the Proton donor in the catalytic mechanism. FMN contacts are provided by residues K142, H174, 214-216, and 236-237; these read NGG and GR.

It belongs to the Dus family. DusA subfamily. FMN serves as cofactor.

It catalyses the reaction 5,6-dihydrouridine(20) in tRNA + NADP(+) = uridine(20) in tRNA + NADPH + H(+). It carries out the reaction 5,6-dihydrouridine(20) in tRNA + NAD(+) = uridine(20) in tRNA + NADH + H(+). The enzyme catalyses 5,6-dihydrouridine(20a) in tRNA + NADP(+) = uridine(20a) in tRNA + NADPH + H(+). The catalysed reaction is 5,6-dihydrouridine(20a) in tRNA + NAD(+) = uridine(20a) in tRNA + NADH + H(+). Catalyzes the synthesis of 5,6-dihydrouridine (D), a modified base found in the D-loop of most tRNAs, via the reduction of the C5-C6 double bond in target uridines. Specifically modifies U20 and U20a in tRNAs. The chain is tRNA-dihydrouridine(20/20a) synthase from Pseudomonas aeruginosa (strain ATCC 15692 / DSM 22644 / CIP 104116 / JCM 14847 / LMG 12228 / 1C / PRS 101 / PAO1).